Consider the following 145-residue polypeptide: Deoxyuridine 5'-triphosphate nucleotidohydrolase (145 aa).

Substrate contacts are provided by residues 62 to 64 (RSG), N75, 79 to 81 (TVD), and K89.

The protein belongs to the dUTPase family. The cofactor is Mg(2+).

It catalyses the reaction dUTP + H2O = dUMP + diphosphate + H(+). It participates in pyrimidine metabolism; dUMP biosynthesis; dUMP from dCTP (dUTP route): step 2/2. This enzyme is involved in nucleotide metabolism: it produces dUMP, the immediate precursor of thymidine nucleotides and it decreases the intracellular concentration of dUTP so that uracil cannot be incorporated into DNA. In Helicobacter pylori (strain J99 / ATCC 700824) (Campylobacter pylori J99), this protein is Deoxyuridine 5'-triphosphate nucleotidohydrolase.